The sequence spans 755 residues: Xaa-Pro dipeptidyl-peptidase (755 aa).

Catalysis depends on charge relay system residues serine 348, aspartate 468, and histidine 498.

It belongs to the peptidase S15 family. Homodimer.

The protein localises to the cytoplasm. The enzyme catalyses Hydrolyzes Xaa-Pro-|- bonds to release unblocked, N-terminal dipeptides from substrates including Ala-Pro-|-p-nitroanilide and (sequentially) Tyr-Pro-|-Phe-Pro-|-Gly-Pro-|-Ile.. In terms of biological role, removes N-terminal dipeptides sequentially from polypeptides having unsubstituted N-termini provided that the penultimate residue is proline. The sequence is that of Xaa-Pro dipeptidyl-peptidase from Streptococcus thermophilus (strain ATCC BAA-491 / LMD-9).